Consider the following 161-residue polypeptide: UPF0506 protein SJCHGC02965 (161 aa).

The signal sequence occupies residues 1-13 (QLLILCLVTVINS). N-linked (GlcNAc...) asparagine glycans are attached at residues N15, N19, N31, N43, N47, N59, N63, N75, and N121. 3 disulfide bridges follow: C127/C141, C134/C145, and C140/C150.

The protein belongs to the UPF0506 family.

Its subcellular location is the secreted. In Schistosoma japonicum (Blood fluke), this protein is UPF0506 protein SJCHGC02965.